Consider the following 130-residue polypeptide: MVESIARVRHIRVTPQKARRVVDMIRGKQAEEALAILKFAPQGASEPIYKLVASAMANARVKADASNSFLAEQDLYIAKAFVDEGTTLKRFQPRAQGRAFRINKRTSHITVVLATPDEADVATTTKKASK.

This sequence belongs to the universal ribosomal protein uL22 family. In terms of assembly, part of the 50S ribosomal subunit.

Its function is as follows. This protein binds specifically to 23S rRNA; its binding is stimulated by other ribosomal proteins, e.g. L4, L17, and L20. It is important during the early stages of 50S assembly. It makes multiple contacts with different domains of the 23S rRNA in the assembled 50S subunit and ribosome. In terms of biological role, the globular domain of the protein is located near the polypeptide exit tunnel on the outside of the subunit, while an extended beta-hairpin is found that lines the wall of the exit tunnel in the center of the 70S ribosome. The sequence is that of Large ribosomal subunit protein uL22 from Clavibacter michiganensis subsp. michiganensis (strain NCPPB 382).